Consider the following 433-residue polypeptide: Enolase (433 aa).

(2R)-2-phosphoglycerate is bound at residue Q163. The Proton donor role is filled by E205. Mg(2+) contacts are provided by D242, E291, and D318. The (2R)-2-phosphoglycerate site is built by K343, R372, S373, and K394. K343 functions as the Proton acceptor in the catalytic mechanism.

It belongs to the enolase family. Mg(2+) serves as cofactor.

The protein localises to the cytoplasm. It localises to the secreted. The protein resides in the cell surface. The catalysed reaction is (2R)-2-phosphoglycerate = phosphoenolpyruvate + H2O. The protein operates within carbohydrate degradation; glycolysis; pyruvate from D-glyceraldehyde 3-phosphate: step 4/5. Its function is as follows. Catalyzes the reversible conversion of 2-phosphoglycerate (2-PG) into phosphoenolpyruvate (PEP). It is essential for the degradation of carbohydrates via glycolysis. The protein is Enolase of Methylibium petroleiphilum (strain ATCC BAA-1232 / LMG 22953 / PM1).